Reading from the N-terminus, the 368-residue chain is Flagellar P-ring protein (368 aa).

The first 24 residues, 1–24, serve as a signal peptide directing secretion; sequence MNSIFRKIVFAAFLLLALPQFALA.

This sequence belongs to the FlgI family. As to quaternary structure, the basal body constitutes a major portion of the flagellar organelle and consists of four rings (L,P,S, and M) mounted on a central rod.

It is found in the periplasm. Its subcellular location is the bacterial flagellum basal body. Functionally, assembles around the rod to form the L-ring and probably protects the motor/basal body from shearing forces during rotation. This chain is Flagellar P-ring protein, found in Geotalea uraniireducens (strain Rf4) (Geobacter uraniireducens).